The primary structure comprises 344 residues: MAKPIITLNGLKIVIMLGMLVIILCGIRFAAEIIVPFILALFIAVILNPLVQHMVRWRVPRVLAVSILMTIIVMAMVLLLAYLGSALNELTRTLPQYRNSIMTPLQALEPLLQRVGIDVSVDQLAHYIDPNAAMTLLTNLLTQLSNAMSSIFLLLLTVLFMLLEVPQLPGKFQQMMARPVEGMAAIQRAIDSVSHYLVLKTAISIITGLVAWAMLAALDVRFAFVWGLLAFALNYIPNIGSVLAAIPPIAQVLVFNGFYEALLVLAGYLLINLVFGNILEPRIMGRGLGLSTLVVFLSLIFWGWLLGPVGMLLSVPLTIIVKIALEQTAGGQSIAVLLSDLNKE.

Residues 1-4 lie on the Cytoplasmic side of the membrane; it reads MAKP. Residues 5-25 traverse the membrane as a helical segment; sequence IITLNGLKIVIMLGMLVIILC. Topologically, residues 26 to 30 are periplasmic; it reads GIRFA. The chain crosses the membrane as a helical span at residues 31 to 51; it reads AEIIVPFILALFIAVILNPLV. At 52–61 the chain is on the cytoplasmic side; sequence QHMVRWRVPR. Residues 62 to 82 form a helical membrane-spanning segment; that stretch reads VLAVSILMTIIVMAMVLLLAY. The Periplasmic portion of the chain corresponds to 83–149; that stretch reads LGSALNELTR…LLTQLSNAMS (67 aa). A helical transmembrane segment spans residues 150-170; sequence SIFLLLLTVLFMLLEVPQLPG. Topologically, residues 171 to 196 are cytoplasmic; it reads KFQQMMARPVEGMAAIQRAIDSVSHY. Residues 197-217 form a helical membrane-spanning segment; it reads LVLKTAISIITGLVAWAMLAA. At 218-221 the chain is on the periplasmic side; sequence LDVR. Residues 222-242 form a helical membrane-spanning segment; sequence FAFVWGLLAFALNYIPNIGSV. Residues 243-257 are Cytoplasmic-facing; sequence LAAIPPIAQVLVFNG. A helical transmembrane segment spans residues 258-278; that stretch reads FYEALLVLAGYLLINLVFGNI. Over 279–292 the chain is Periplasmic; that stretch reads LEPRIMGRGLGLST. A helical transmembrane segment spans residues 293 to 313; that stretch reads LVVFLSLIFWGWLLGPVGMLL. Residues 314 to 344 lie on the Cytoplasmic side of the membrane; it reads SVPLTIIVKIALEQTAGGQSIAVLLSDLNKE.

The protein belongs to the autoinducer-2 exporter (AI-2E) (TC 2.A.86) family.

The protein localises to the cell inner membrane. It carries out the reaction (2R,4S)-2-methyltetrahydrofuran-2,3,3,4-tetrol(in) = (2R,4S)-2-methyltetrahydrofuran-2,3,3,4-tetrol(out). In terms of biological role, involved in the transport of the quorum-sensing signal autoinducer 2 (AI-2). Controls the transport of AI-2 either by enhancing its secretion or inhibiting its uptake and consequently represses biofilm formation and motility and affects the global gene expression in biofilms. This chain is AI-2 transport protein TqsA, found in Escherichia coli (strain K12).